The chain runs to 257 residues: Hydroxyacylglutathione hydrolase (257 aa).

Positions 56, 58, 60, 61, 112, 131, and 169 each coordinate Zn(2+).

Belongs to the metallo-beta-lactamase superfamily. Glyoxalase II family. Monomer. Zn(2+) is required as a cofactor.

The catalysed reaction is an S-(2-hydroxyacyl)glutathione + H2O = a 2-hydroxy carboxylate + glutathione + H(+). It participates in secondary metabolite metabolism; methylglyoxal degradation; (R)-lactate from methylglyoxal: step 2/2. In terms of biological role, thiolesterase that catalyzes the hydrolysis of S-D-lactoyl-glutathione to form glutathione and D-lactic acid. The chain is Hydroxyacylglutathione hydrolase from Ectopseudomonas mendocina (strain ymp) (Pseudomonas mendocina).